We begin with the raw amino-acid sequence, 200 residues long: Putative protein ATXN8OS (200 aa).

The disordered stretch occupies residues 19–39 (PFSGLKEEEEEDGEDDEEEEE). Positions 25–39 (EEEEEDGEDDEEEEE) are enriched in acidic residues.

In terms of tissue distribution, expressed in brain. Expressed in muscle tissues (at protein level).

The protein resides in the cytoplasm. The polypeptide is Putative protein ATXN8OS (Homo sapiens (Human)).